Reading from the N-terminus, the 79-residue chain is Sperm-specific basic nuclear protein SP4 (79 aa).

A disordered region spans residues Met1–Ser79. A compositionally biased stretch (basic residues) spans Arg9–Ala60. Repeats lie at residues Arg45–Ala52 and Arg53–Ala60. The segment covering Arg61–Ser79 has biased composition (basic and acidic residues).

It is found in the nucleus. This is Sperm-specific basic nuclear protein SP4 (sp4-a) from Xenopus laevis (African clawed frog).